A 445-amino-acid chain; its full sequence is tRNA modification GTPase MnmE (445 aa).

Residues R20, E79, and K119 each contribute to the (6S)-5-formyl-5,6,7,8-tetrahydrofolate site. The TrmE-type G domain occupies 215-371; that stretch reads GLKLAIIGPP…ILKNIENIAE (157 aa). N225 contacts K(+). Residues 225–230, 244–250, and 269–272 contribute to the GTP site; these read NVGKSS, SNIAGTT, and DTAG. S229 contacts Mg(2+). K(+) is bound by residues S244, I246, and T249. Residue T250 participates in Mg(2+) binding. Position 445 (K445) interacts with (6S)-5-formyl-5,6,7,8-tetrahydrofolate.

It belongs to the TRAFAC class TrmE-Era-EngA-EngB-Septin-like GTPase superfamily. TrmE GTPase family. In terms of assembly, homodimer. Heterotetramer of two MnmE and two MnmG subunits. K(+) serves as cofactor.

It localises to the cytoplasm. Its function is as follows. Exhibits a very high intrinsic GTPase hydrolysis rate. Involved in the addition of a carboxymethylaminomethyl (cmnm) group at the wobble position (U34) of certain tRNAs, forming tRNA-cmnm(5)s(2)U34. The protein is tRNA modification GTPase MnmE of Rickettsia rickettsii (strain Iowa).